Reading from the N-terminus, the 714-residue chain is Protein spire homolog 2 (714 aa).

Residues 22-203 (LSLEEVLKAY…RALFVETLEL (182 aa)) enclose the KIND domain. The tract at residues 136–162 (DSEDSGCGAADEGYGGPEEEEEAEGVP) is disordered. WH2 domains follow at residues 248 to 262 (QLMR…LKKV), 278 to 296 (PFEM…LRKV), and 342 to 359 (LHEK…LRPV). A phosphoserine mark is found at Ser-371, Ser-440, Ser-442, and Ser-476. Positions 453–516 (VASGLQSATH…SSGDRPEASM (64 aa)) are disordered. Residues 486–496 (DQGTCPASVSD) show a composition bias toward polar residues. The spir-box stretch occupies residues 534–554 (LALTVEEVMDVRRVLVKAEME).

The protein belongs to the spire family.

The protein resides in the cytoplasm. The protein localises to the cytoskeleton. It localises to the cytosol. Its subcellular location is the cell membrane. It is found in the cytoplasmic vesicle membrane. Its function is as follows. Acts as an actin nucleation factor, remains associated with the slow-growing pointed end of the new filament. Involved in intracellular vesicle transport along actin fibers, providing a novel link between actin cytoskeleton dynamics and intracellular transport. Required for asymmetric spindle positioning and asymmetric cell division during meiosis. Required for normal formation of the cleavage furrow and for polar body extrusion during female germ cell meiosis. Also acts in the nucleus: together with SPIRE1 and SPIRE2, promotes assembly of nuclear actin filaments in response to DNA damage in order to facilitate movement of chromatin and repair factors after DNA damage. This is Protein spire homolog 2 (SPIRE2) from Homo sapiens (Human).